A 108-amino-acid chain; its full sequence is Thioredoxin (108 aa).

The region spanning 2–108 is the Thioredoxin domain; it reads SEHIVNVTDA…QLAAFLDANI (107 aa). C33 and C36 are disulfide-bonded.

The protein belongs to the thioredoxin family.

Its function is as follows. Participates in various redox reactions through the reversible oxidation of its active center dithiol to a disulfide and catalyzes dithiol-disulfide exchange reactions. The sequence is that of Thioredoxin (trxA) from Pseudomonas aeruginosa (strain ATCC 15692 / DSM 22644 / CIP 104116 / JCM 14847 / LMG 12228 / 1C / PRS 101 / PAO1).